A 600-amino-acid polypeptide reads, in one-letter code: Brain-enriched guanylate kinase-associated protein (600 aa).

Position 1 is an N-acetylmethionine (Met1). The residue at position 137 (Tyr137) is a Phosphotyrosine. The segment at 192 to 222 is disordered; sequence PGSLSSRMSDASARDLGYRDGVEKSGPRPPY. Ser200 carries the post-translational modification Phosphoserine. Residues 203–217 show a composition bias toward basic and acidic residues; sequence SARDLGYRDGVEKSG. Ser229 and Ser246 each carry phosphoserine. The residue at position 249 (Thr249) is a Phosphothreonine. Ser265 carries the phosphoserine modification. A disordered region spans residues 298–317; that stretch reads SSYSSFSATSEEKEHAQAGT. Residue Ser372 is modified to Phosphoserine. Residue Arg380 is modified to Asymmetric dimethylarginine. A phosphoserine mark is found at Ser463, Ser473, Ser483, Ser485, Ser508, Ser510, and Ser514. A disordered region spans residues 537-590; the sequence is GAGSSPEPEHGSRESLEPSSMEASPEMHPPTRLSPQQAFPRTGGSGLSRKDSLT. Residues 543 to 552 are compositionally biased toward basic and acidic residues; the sequence is EPEHGSRESL. 2 positions are modified to phosphoserine: Ser560 and Ser570.

As to quaternary structure, interacts with DLG4 and DLGAP1 and forms a ternary complex.

The protein resides in the cytoplasm. The protein localises to the membrane. Its function is as follows. May sustain the structure of the postsynaptic density (PSD). The protein is Brain-enriched guanylate kinase-associated protein (Begain) of Mus musculus (Mouse).